The following is a 25-amino-acid chain: Germin-like protein (25 aa).

It belongs to the germin family.

This chain is Germin-like protein, found in Populus euphratica (Euphrates poplar).